Reading from the N-terminus, the 487-residue chain is GTPase Der (487 aa).

2 consecutive EngA-type G domains span residues 3 to 166 (PVIA…PRDA) and 193 to 366 (IKIA…KSAV). Residues 9–16 (GRPNVGKS), 56–60 (DTGGI), 118–121 (NKID), 199–206 (GRPNVGKS), 246–250 (DTAGV), and 311–314 (NKWD) each bind GTP. The KH-like domain occupies 367–451 (TRWPTSRLTQ…PIRIEYKGGE (85 aa)). A compositionally biased stretch (basic and acidic residues) spans 448-461 (KGGENPYEGKKNTL). The interval 448–487 (KGGENPYEGKKNTLTDRQVNKKRRLMSHHKKAEKKRRDKR) is disordered. Basic residues predominate over residues 467–487 (NKKRRLMSHHKKAEKKRRDKR).

The protein belongs to the TRAFAC class TrmE-Era-EngA-EngB-Septin-like GTPase superfamily. EngA (Der) GTPase family. In terms of assembly, associates with the 50S ribosomal subunit.

In terms of biological role, GTPase that plays an essential role in the late steps of ribosome biogenesis. The chain is GTPase Der from Pseudomonas putida (strain W619).